Reading from the N-terminus, the 201-residue chain is Inosine triphosphate pyrophosphatase (201 aa).

ITP is bound at residue 16-21; it reads TGNAKK. E44 contacts Mg(2+). ITP contacts are provided by residues K56, 72–73, K89, 148–151, K171, and 176–177; these read DT, FGWD, and HR.

Belongs to the HAM1 NTPase family. As to quaternary structure, homodimer. The cofactor is Mg(2+). Mn(2+) serves as cofactor.

The protein resides in the cytoplasm. It catalyses the reaction ITP + H2O = IMP + diphosphate + H(+). The catalysed reaction is dITP + H2O = dIMP + diphosphate + H(+). The enzyme catalyses XTP + H2O = XMP + diphosphate + H(+). In terms of biological role, pyrophosphatase that hydrolyzes non-canonical purine nucleotides such as inosine triphosphate (ITP), deoxyinosine triphosphate (dITP) or xanthosine 5'-triphosphate (XTP) to their respective monophosphate derivatives. The enzyme does not distinguish between the deoxy- and ribose forms. Probably excludes non-canonical purines from RNA and DNA precursor pools, thus preventing their incorporation into RNA and DNA and avoiding chromosomal lesions. The polypeptide is Inosine triphosphate pyrophosphatase (Sorghum bicolor (Sorghum)).